Reading from the N-terminus, the 333-residue chain is MDVVSLDKPFMYFEEIDNELDYEPESANEVAKKLPYQGQLKLLLGELFFLSKLQRHGILDGATVVYIGSAPGTHIRYLRDHFYNLGVIIKWMLIDGRHHDPILNGLRDVTLVTRFVDEEYLRSIKKQLHPSKIILISDVRSKRGGNEPSTEDLLSNYALQNVMISILNPVASSLKWRCPFPDQWIKDFYIPHGNKMSQPFAPSYSAEMRLLSIYTGENMRLTRVTKSDAVNYEKKMYYLNKIVRNKVVVNFDYPNQEYDYFHMYFMLRTVYCNKTFPTTKAKVLFLQQSIFRFLNIPTTSTEKVSHEPIQCKVSSKDSVYKNRNSKRSVRGNK.

Y22 serves as a coordination point for mRNA. Q39, Y66, G68, G72, D95, R97, V116, and D138 together coordinate S-adenosyl-L-methionine. The binding to NPH-I stretch occupies residues 169 to 249 (PVASSLKWRC…NKIVRNKVVV (81 aa)). Positions 169–333 (PVASSLKWRC…NSKRSVRGNK (165 aa)) are binding to Rap94. The active-site For methyltransferase activity is the K175. MRNA-binding positions include 177–180 (RCPF), D182, 205–207 (SAE), and E233.

Belongs to the class I-like SAM-binding methyltransferase superfamily. Poxvirus/kinetoplastid 2'-O-MTase family. Interacts with poly(A) polymerase catalytic subunit OPG063. Interacts with OPG109 and OPG123; these interactions might help linking transcription to capping and polyadenylation.

It is found in the virion. The enzyme catalyses a 5'-end (N(7)-methyl 5'-triphosphoguanosine)-ribonucleoside in mRNA + S-adenosyl-L-methionine = a 5'-end (N(7)-methyl 5'-triphosphoguanosine)-(2'-O-methyl-ribonucleoside) in mRNA + S-adenosyl-L-homocysteine + H(+). Its function is as follows. Displays methyltransferase, positive regulation of the poly(A) polymerase and transcription elongation activities. Involved in the modification of both mRNA ends and in intermediate and late gene positive transcription elongation. At the mRNAs 5' end, methylates the ribose 2' OH group of the first transcribed nucleotide, thereby producing a 2'-O-methylpurine cap. At the 3' end, functions as a processivity factor which stimulates the activity of the viral poly(A) polymerase OPG063 that creates mRNA's poly(A) tail. In the presence of OPG102, OPG063 does not dissociate from the RNA allowing tail elongation to around 250 adenylates. In Homo sapiens (Human), this protein is Cap-specific mRNA (nucleoside-2'-O-)-methyltransferase (OPG102).